Reading from the N-terminus, the 168-residue chain is Zinc finger A20 and AN1 domain-containing stress-associated protein 1 (168 aa).

An A20-type zinc finger spans residues 13-47 (PSEPKLCVKGCGFFGSPSNMNLCSKCYRDIRATEE). Zn(2+)-binding residues include Cys-19, Cys-23, Cys-35, and Cys-38. The tract at residues 49 to 105 (TASAKAAVEKSLNPNKPKTQPQQSQEITQGVLGSGSSSSSTRGGDSAAAPLDPPKST) is disordered. A compositionally biased stretch (polar residues) spans 60–76 (LNPNKPKTQPQQSQEIT). Over residues 82 to 94 (SGSSSSSTRGGDS) the composition is skewed to low complexity. The AN1-type zinc finger occupies 103–149 (KSTATRCLSCNKKVGVTGFKCRCGSTFCGTHRYPESHECQFDFKGVA). Residues Cys-109, Cys-112, Cys-123, Cys-125, Cys-130, His-133, His-139, and Cys-141 each coordinate Zn(2+).

Its function is as follows. May be involved in environmental stress response. The sequence is that of Zinc finger A20 and AN1 domain-containing stress-associated protein 1 (SAP1) from Arabidopsis thaliana (Mouse-ear cress).